The primary structure comprises 402 residues: MADPKYADLPGIARNEPDVYETSDLPEDDQAEFDAEELSSTSVEHIIVNPNAAYDKFKDKRVGTKGLDFSDRIGKTKRTGYESGDYEMLGEGLGVKETPQQKYQRLLHEVQELTTEVEKIKTTVKESATEEKLTPVVLAKQLAALKQQLVASHLEKLLGPDAAINLADPDGALAKRLLLQLEATKSSKGSSGGKSTGGTPPDSSLVTYELHSRPEQDKFSQAAKVAELEKRLTELEATVRCDQDAQNPLSAGLQGACLMETVELLQAKVNALDLAVLDQVEARLQSVLGKVNEIAKHKASVEDADTQNKVHQLYETIQRWSPVASTLPELVQRLVTIKQLHEQAMQFGQLLTHLDTTQQMMASSLKDNTALLTQVQTTMRENLATVEGNFASIDARMKKLGK.

Residues 1 to 24 form a disordered region; sequence MADPKYADLPGIARNEPDVYETSD. The residue at position 2 (alanine 2) is an N-acetylalanine. A Phosphotyrosine modification is found at tyrosine 6. Serine 83 carries the phosphoserine modification. Position 86 is a phosphotyrosine (tyrosine 86). The stretch at 100–130 forms a coiled coil; it reads QQKYQRLLHEVQELTTEVEKIKTTVKESATE. Phosphothreonine occurs at positions 134 and 199. A disordered region spans residues 185–205; that stretch reads KSSKGSSGGKSTGGTPPDSSL. A coiled-coil region spans residues 215-247; that stretch reads EQDKFSQAAKVAELEKRLTELEATVRCDQDAQN. Position 321 is a phosphoserine (serine 321).

The protein belongs to the dynactin subunit 2 family. As to quaternary structure, subunit of dynactin, a multiprotein complex part of a tripartite complex with dynein and a adapter, such as BICDL1, BICD2 or HOOK3. The dynactin complex is built around ACTR1A/ACTB filament and consists of an actin-related filament composed of a shoulder domain, a pointed end and a barbed end. Its length is defined by its flexible shoulder domain. The soulder is composed of 2 DCTN1 subunits, 4 DCTN2 and 2 DCTN3. The 4 DCNT2 (via N-terminus) bind the ACTR1A filament and act as molecular rulers to determine the length. The pointed end is important for binding dynein-dynactin cargo adapters and consists of 4 subunits: ACTR10, DCNT4, DCTN5 and DCTN6. The barbed end is composed of a CAPZA1:CAPZB heterodimers, which binds ACTR1A/ACTB filament and dynactin and stabilizes dynactin. Interacts with BICD2 and CEP135. Interacts with DYNAP. Interacts with ECPAS. Interacts with MAPRE1.

The protein resides in the cytoplasm. Its subcellular location is the cytoskeleton. It localises to the microtubule organizing center. It is found in the centrosome. The protein localises to the membrane. Functionally, part of the dynactin complex that activates the molecular motor dynein for ultra-processive transport along microtubules. In the dynactin soulder domain, binds the ACTR1A filament and acts as a molecular ruler to determine the length. Modulates cytoplasmic dynein binding to an organelle, and plays a role in prometaphase chromosome alignment and spindle organization during mitosis. Involved in anchoring microtubules to centrosomes. May play a role in synapse formation during brain development. This is Dynactin subunit 2 (Dctn2) from Rattus norvegicus (Rat).